Reading from the N-terminus, the 158-residue chain is Transcriptional repressor NrdR (158 aa).

A disordered region spans residues 1 to 22; it reads MRCPYCGSEDTQVKDSRPAEDN. Residues 3–34 fold into a zinc finger; sequence CPYCGSEDTQVKDSRPAEDNTSIRRRRICPDC. A compositionally biased stretch (basic and acidic residues) spans 11 to 22; it reads TQVKDSRPAEDN. In terms of domain architecture, ATP-cone spans 49 to 139; the sequence is LMVIKKTGRK…VYRDFSLAED (91 aa).

Belongs to the NrdR family. Zn(2+) serves as cofactor.

Its function is as follows. Negatively regulates transcription of bacterial ribonucleotide reductase nrd genes and operons by binding to NrdR-boxes. The chain is Transcriptional repressor NrdR from Rhizobium etli (strain CIAT 652).